A 218-amino-acid chain; its full sequence is Putative receptor like protein 25 (218 aa).

At 1-178 (MIYTKNAYGS…QEDAKVLNWK (178 aa)) the chain is on the extracellular side. LRR repeat units follow at residues 34–58 (LTLY…IGLL), 59–82 (KALI…MANL), 83–106 (IELE…LKTL), and 108–131 (FLGY…QITG). Asn65 carries an N-linked (GlcNAc...) asparagine glycan. Asn113 carries N-linked (GlcNAc...) asparagine glycosylation. Residues 179-199 (AVATGYGPGVFFGLAIAQIIA) traverse the membrane as a helical segment. Residues 200–218 (SYKPEWLVKIIGPNKRRNH) are Cytoplasmic-facing.

Belongs to the RLP family.

The protein localises to the cell membrane. The sequence is that of Putative receptor like protein 25 from Arabidopsis thaliana (Mouse-ear cress).